Reading from the N-terminus, the 417-residue chain is Probable serine incorporator (417 aa).

Transmembrane regions (helical) follow at residues 25–45 (VYVV…YWTF), 69–89 (VVYR…LVMI), 104–124 (GYWP…FFIP), 131–151 (YTWI…VLLI), 180–200 (CVLS…MLVF), 208–228 (INQF…VLSI), 239–259 (SGLF…YSAI), 276–296 (KEST…YSAF), 339–359 (FFHF…TNWA), and 391–411 (VVSS…PILL).

It belongs to the TDE1 family.

Its subcellular location is the endoplasmic reticulum membrane. In terms of biological role, enhances the incorporation of serine into phosphatidylserine and sphingolipids. In Dictyostelium discoideum (Social amoeba), this protein is Probable serine incorporator (serinc).